The chain runs to 756 residues: MTEQLRQAALDFHEFPIPGKIEVTPTKSLATQRDLALAYSPGVAEPCLEIEKDPAASYKYTARGNLVAVISNGTAVLGLGNIGALAGKPVMEGKGVLFKKFAGINVFDIEVNEHDPDKLVDIIASLEPTFGGVNLEDIKAPECFYIEQKLRERMNIPVFHDDQHGTAIISAAAIINSLRIVGKKIEDVRLVASGAGAASIACLNLLLSLGMKRENITVCDSKGVVYKGRDDKMDQTKKEYAIEDNGWRKLADAIPNADIFLGCSAAGALTQDMVKSMAAHPIILALANPNPEITPPEAKAVRPDAIVCTGRSDYPNQVNNVLCFPFIFRGALDVGATTINEEMKRAAVYAIADLALEEQNEVVTSAYGGEGATFGADYVIPRPFDPRLIVRIAPAVAKAAMESGVATRPIQNWDAYVEKLTQFVYKTSLFMRPIFSQAKSAKQRIILAEGEENKALHATQEVISMGLANPILIGRRSVIEEKIKKLGLRLTAGVDFEIVDNEDNPRYEECWKHYYELTKRKGITPAIAKRVVRSNTTVLASTLLSLGYADALVCGLFGSYGKHLASIRDIIGLKDGVKTAAALNSLVLPTGNVFLTDTHVNSNPTAEELAEITLMAAEEIHRFGIEPAVALLSHSNFGSSDSLGAPKMREVLQIVKERNPHLMIDGEMRGDLAMNEAHRKELMPDSPLKGSANLLVFPDLSASRISYSLLRGTTTAITVGPILMGMNKSAHILNPGASVRRIINMIAYAAVKAQQE.

A malic enzyme region spans residues 1–428 (MTEQLRQAAL…KLTQFVYKTS (428 aa)). Y39 acts as the Proton donor in catalysis. K94 (proton acceptor) is an active-site residue. Residues E136, D137, and D162 each coordinate a divalent metal cation. Residues 195–198 (AGAA), N288, and N320 contribute to the NADP(+) site. The phosphate acetyltransferase stretch occupies residues 429–756 (LFMRPIFSQA…AYAAVKAQQE (328 aa)).

In the N-terminal section; belongs to the malic enzymes family. The protein in the C-terminal section; belongs to the phosphate acetyltransferase and butyryltransferase family. Mg(2+) serves as cofactor. The cofactor is Mn(2+).

The catalysed reaction is (S)-malate + NADP(+) = pyruvate + CO2 + NADPH. It carries out the reaction oxaloacetate + H(+) = pyruvate + CO2. The sequence is that of NADP-dependent malic enzyme (maeB) from Haemophilus influenzae (strain ATCC 51907 / DSM 11121 / KW20 / Rd).